Consider the following 251-residue polypeptide: Triosephosphate isomerase (251 aa).

9-11 serves as a coordination point for substrate; it reads NWK. The Electrophile role is filled by histidine 95. The Proton acceptor role is filled by glutamate 167. Substrate is bound by residues glycine 173, serine 213, and 234–235; that span reads GG. Residue serine 213 is modified to Phosphoserine.

This sequence belongs to the triosephosphate isomerase family. Homodimer.

The protein resides in the cytoplasm. It carries out the reaction D-glyceraldehyde 3-phosphate = dihydroxyacetone phosphate. It participates in carbohydrate biosynthesis; gluconeogenesis. Its pathway is carbohydrate degradation; glycolysis; D-glyceraldehyde 3-phosphate from glycerone phosphate: step 1/1. In terms of biological role, involved in the gluconeogenesis. Catalyzes stereospecifically the conversion of dihydroxyacetone phosphate (DHAP) to D-glyceraldehyde-3-phosphate (G3P). The chain is Triosephosphate isomerase from Shouchella clausii (strain KSM-K16) (Alkalihalobacillus clausii).